Consider the following 370-residue polypeptide: Tyrosyl-DNA phosphodiesterase 2 (370 aa).

At Met1 the chain carries N-acetylmethionine. The interval 1–32 (MASGSSSDAAEPAGPAGRAASAPEAAQAEEDR) is disordered. Low complexity predominate over residues 9–26 (AAEPAGPAGRAASAPEAA). Lys34 participates in a covalent cross-link: Glycyl lysine isopeptide (Lys-Gly) (interchain with G-Cter in SUMO2). At Thr99 the chain carries Phosphothreonine; by ACVR1B. The tract at residues 130–134 (NIDGL) is interaction with 5' end of substrate DNA. Mg(2+)-binding residues include Asp132 and Glu162. The tract at residues 236–241 (HLESTR) is interaction with 5' end of substrate DNA. Asp272 acts as the Proton donor/acceptor in catalysis. Interaction with 5' end of substrate DNA regions lie at residues 274 to 276 (NLR) and 315 to 321 (LRIPAAY).

It belongs to the CCR4/nocturin family. In terms of assembly, interacts with TRAF2, TRAF3, TRAF5, TRAF6, TNFRSF8/CD30, TNFRSF5/CD40, TNFRSF1B/TNF-R75, ETS1, ETS2, FLI1, SMAD3 and ACVR1B/ALK4. Mg(2+) is required as a cofactor. Requires Mn(2+) as cofactor. Post-translationally, ubiquitinated by TRAF6. As to expression, widely expressed. Expressed in whole brain, cerebellum, quiescent cortical astrocytes and cerebellar granule neurons.

It localises to the nucleus. Its subcellular location is the PML body. It is found in the nucleolus. The protein resides in the cytoplasm. DNA repair enzyme that can remove a variety of covalent adducts from DNA through hydrolysis of a 5'-phosphodiester bond, giving rise to DNA with a free 5' phosphate. Catalyzes the hydrolysis of dead-end complexes between DNA and the topoisomerase 2 (TOP2) active site tyrosine residue. The 5'-tyrosyl DNA phosphodiesterase activity can enable the repair of TOP2-induced DNA double-strand breaks/DSBs without the need for nuclease activity, creating a 'clean' DSB with 5'-phosphate termini that are ready for ligation. Thereby, protects the transcription of many genes involved in neurological development and maintenance from the abortive activity of TOP2. Hydrolyzes 5'-phosphoglycolates on protruding 5' ends on DSBs due to DNA damage by radiation and free radicals. Has preference for single-stranded DNA or duplex DNA with a 4 base pair overhang as substrate. Also has 3'-tyrosyl DNA phosphodiesterase activity, but less efficiently and much slower than TDP1. Constitutes the major if not only 5'-tyrosyl-DNA phosphodiesterase in cells. Also acts as an adapter by participating in the specific activation of MAP3K7/TAK1 in response to TGF-beta: associates with components of the TGF-beta receptor-TRAF6-TAK1 signaling module and promotes their ubiquitination dependent complex formation. Involved in non-canonical TGF-beta induced signaling routes. May also act as a negative regulator of ETS1 and may inhibit NF-kappa-B activation. Acts as a regulator of ribosome biogenesis following stress. This is Tyrosyl-DNA phosphodiesterase 2 (Tdp2) from Mus musculus (Mouse).